Consider the following 276-residue polypeptide: Shikimate dehydrogenase (NADP(+)) (276 aa).

Residues 19–21 (SKS) and T66 each bind shikimate. K70 functions as the Proton acceptor in the catalytic mechanism. D82 lines the NADP(+) pocket. Shikimate-binding residues include N91 and D107. NADP(+) is bound by residues 133–137 (GAGGA), 157–162 (NRTRSR), and L222. Y224 serves as a coordination point for shikimate. Residue G245 coordinates NADP(+).

It belongs to the shikimate dehydrogenase family. As to quaternary structure, homodimer.

It carries out the reaction shikimate + NADP(+) = 3-dehydroshikimate + NADPH + H(+). It participates in metabolic intermediate biosynthesis; chorismate biosynthesis; chorismate from D-erythrose 4-phosphate and phosphoenolpyruvate: step 4/7. Its function is as follows. Involved in the biosynthesis of the chorismate, which leads to the biosynthesis of aromatic amino acids. Catalyzes the reversible NADPH linked reduction of 3-dehydroshikimate (DHSA) to yield shikimate (SA). This is Shikimate dehydrogenase (NADP(+)) from Ruegeria sp. (strain TM1040) (Silicibacter sp.).